Here is a 345-residue protein sequence, read N- to C-terminus: N-acetyl-gamma-glutamyl-phosphate reductase (345 aa).

Residue C149 is part of the active site.

This sequence belongs to the NAGSA dehydrogenase family. Type 1 subfamily.

The protein resides in the cytoplasm. The catalysed reaction is N-acetyl-L-glutamate 5-semialdehyde + phosphate + NADP(+) = N-acetyl-L-glutamyl 5-phosphate + NADPH + H(+). The protein operates within amino-acid biosynthesis; L-arginine biosynthesis; N(2)-acetyl-L-ornithine from L-glutamate: step 3/4. In terms of biological role, catalyzes the NADPH-dependent reduction of N-acetyl-5-glutamyl phosphate to yield N-acetyl-L-glutamate 5-semialdehyde. The polypeptide is N-acetyl-gamma-glutamyl-phosphate reductase (Bacillus cereus (strain B4264)).